The sequence spans 176 residues: Transcription termination/antitermination protein NusG (176 aa).

The KOW domain maps to 125–149 (GEVVRVVEGPFANFTATVEEYDVEH).

Belongs to the NusG family.

In terms of biological role, participates in transcription elongation, termination and antitermination. The sequence is that of Transcription termination/antitermination protein NusG from Helicobacter pylori (strain J99 / ATCC 700824) (Campylobacter pylori J99).